Consider the following 530-residue polypeptide: Arginine--tRNA ligase (530 aa).

Positions 113–123 (ANPTGPLHIGH) match the 'HIGH' region motif.

It belongs to the class-I aminoacyl-tRNA synthetase family. As to quaternary structure, monomer.

Its subcellular location is the cytoplasm. It carries out the reaction tRNA(Arg) + L-arginine + ATP = L-arginyl-tRNA(Arg) + AMP + diphosphate. This chain is Arginine--tRNA ligase, found in Campylobacter jejuni (strain RM1221).